The chain runs to 260 residues: Proteasome subunit alpha (260 aa).

The protein belongs to the peptidase T1A family. In terms of assembly, the 20S proteasome core is composed of 14 alpha and 14 beta subunits that assemble into four stacked heptameric rings, resulting in a barrel-shaped structure. The two inner rings, each composed of seven catalytic beta subunits, are sandwiched by two outer rings, each composed of seven alpha subunits. The catalytic chamber with the active sites is on the inside of the barrel. Has a gated structure, the ends of the cylinder being occluded by the N-termini of the alpha-subunits. Is capped at one or both ends by the proteasome regulatory ATPase, PAN.

It localises to the cytoplasm. The formation of the proteasomal ATPase PAN-20S proteasome complex, via the docking of the C-termini of PAN into the intersubunit pockets in the alpha-rings, triggers opening of the gate for substrate entry. Interconversion between the open-gate and close-gate conformations leads to a dynamic regulation of the 20S proteasome proteolysis activity. Component of the proteasome core, a large protease complex with broad specificity involved in protein degradation. The sequence is that of Proteasome subunit alpha from Thermococcus onnurineus (strain NA1).